A 502-amino-acid chain; its full sequence is DEP domain-containing protein 7 (502 aa).

Residues Leu37–Thr127 form the DEP domain.

The protein belongs to the DEPDC7 family.

The sequence is that of DEP domain-containing protein 7 (DEPDC7) from Macaca fascicularis (Crab-eating macaque).